The chain runs to 440 residues: Xylose isomerase (440 aa).

Catalysis depends on residues H101 and D104. Mg(2+) contacts are provided by E232, E268, H271, D296, D307, D309, and D339.

The protein belongs to the xylose isomerase family. As to quaternary structure, homotetramer. It depends on Mg(2+) as a cofactor.

It localises to the cytoplasm. It carries out the reaction alpha-D-xylose = alpha-D-xylulofuranose. This Escherichia fergusonii (strain ATCC 35469 / DSM 13698 / CCUG 18766 / IAM 14443 / JCM 21226 / LMG 7866 / NBRC 102419 / NCTC 12128 / CDC 0568-73) protein is Xylose isomerase.